We begin with the raw amino-acid sequence, 424 residues long: Phosphomethylpyrimidine synthase (424 aa).

Residues Asn-66, Met-95, Tyr-124, His-163, Ser-185–Gly-187, Asp-226–Arg-229, and Glu-265 each bind substrate. A Zn(2+)-binding site is contributed by His-269. Phe-292 contributes to the substrate binding site. His-333 is a Zn(2+) binding site. Positions 408, 411, and 415 each coordinate [4Fe-4S] cluster.

It belongs to the ThiC family. [4Fe-4S] cluster serves as cofactor.

The catalysed reaction is 5-amino-1-(5-phospho-beta-D-ribosyl)imidazole + S-adenosyl-L-methionine = 4-amino-2-methyl-5-(phosphooxymethyl)pyrimidine + CO + 5'-deoxyadenosine + formate + L-methionine + 3 H(+). It participates in cofactor biosynthesis; thiamine diphosphate biosynthesis. Functionally, catalyzes the synthesis of the hydroxymethylpyrimidine phosphate (HMP-P) moiety of thiamine from aminoimidazole ribotide (AIR) in a radical S-adenosyl-L-methionine (SAM)-dependent reaction. This is Phosphomethylpyrimidine synthase from Thermotoga neapolitana (strain ATCC 49049 / DSM 4359 / NBRC 107923 / NS-E).